The sequence spans 464 residues: MEEIAKEYDVIVLGTGLTECILSGVLSVKGKKVLHIDRNDHYGGEAASLNLQALFKKYGNYNSGEEPWAKYGRNTDWNIDLVPKFLMSSGELTNILVSTDVTRYLEFKQVAGSFVQQGSGPKATVAKVPSDAAEALRSPLMGIFEKRRMKSFIEWVGTFDLKDPATHKGLDLSSCTMKDVYDKFGLETGTKDFIGHAMALYLSDDYISKPGGAPEAIDRIRLYGNSVARYGKSPYIYPLFGLGDLPQGFARLSAIYGGTYMLNTNIDELLYEDGKAVGIKATMTGIEPEMKFETRAKMILGDPSYFSDKVKVVGHVLRAICVLKHPLAGTSDADSCQLIIPQSQVGRKNDIYIACVSSAHSVCPKGYYIAIVSTIAETSANHHLELQPGLERLGKIEEQFMGPPIPLYAPIEDGTSSGIFISKSYDATSHFETTTDDVKDIYRRATGEELKVEGLRDLQVAGDE.

This sequence belongs to the Rab GDI family. In terms of assembly, interacts with the GDP-bound form of Rab GTPase YPT7.

Regulates the GDP/GTP exchange reaction of YPT7 by inhibiting the dissociation of GDP from it, and the subsequent binding of GTP to YTP7. This is Rab GDP-dissociation inhibitor (GDI1) from Pyricularia oryzae (strain 70-15 / ATCC MYA-4617 / FGSC 8958) (Rice blast fungus).